The primary structure comprises 256 residues: Ras-related protein Rab-26 (256 aa).

Residues 1–51 are disordered; that stretch reads MSRKKTPKSKGASTPAASTLPTANGARPARSGTALSGPDAPPNGPLQPGRP. A compositionally biased stretch (low complexity) spans 12-23; that stretch reads ASTPAASTLPTA. The GTP site is built by serine 72, glycine 73, valine 74, glycine 75, lysine 76, threonine 77, cysteine 78, serine 95, and threonine 96. A Mg(2+)-binding site is contributed by threonine 77. 2 consecutive short sequence motifs (switch) follow at residues 86 to 101 and 119 to 136; these read GAFL…GIDF and DTAG…YYRD. Mg(2+)-binding residues include threonine 96 and aspartate 119. The GTP site is built by glycine 122, asparagine 177, lysine 178, aspartate 180, alanine 208, and lysine 209. Residues cysteine 253 and cysteine 254 are each lipidated (S-geranylgeranyl cysteine).

Belongs to the small GTPase superfamily. Rab family. Interacts with RIMS1. Interacts with ADRA2B. It depends on Mg(2+) as a cofactor. Predominantly expressed in brain.

The protein localises to the golgi apparatus membrane. It is found in the cytoplasmic vesicle. It localises to the secretory vesicle membrane. The catalysed reaction is GTP + H2O = GDP + phosphate + H(+). With respect to regulation, regulated by guanine nucleotide exchange factors (GEFs) which promote the exchange of bound GDP for free GTP. Regulated by GTPase activating proteins (GAPs) which increase the GTP hydrolysis activity. Inhibited by GDP dissociation inhibitors (GDIs). Functionally, the small GTPases Rab are key regulators of intracellular membrane trafficking, from the formation of transport vesicles to their fusion with membranes. Rabs cycle between an inactive GDP-bound form and an active GTP-bound form that is able to recruit to membranes different set of downstream effectors directly responsible for vesicle formation, movement, tethering and fusion. RAB26 mediates transport of ADRA2A and ADRA2B from the Golgi to the cell membrane. Plays a role in the maturation of zymogenic granules and in pepsinogen secretion in the stomach. Plays a role in the secretion of amylase from acinar granules in the parotid gland. The sequence is that of Ras-related protein Rab-26 from Homo sapiens (Human).